The primary structure comprises 350 residues: Fe-S cluster assembly protein dre2 (350 aa).

The tract at residues 23–156 (TSFNLRTLLL…KPDHSASVAV (134 aa)) is N-terminal SAM-like domain. Residues 157 to 242 (PLRLRRKDNS…EDTLLTEEDM (86 aa)) are linker. A disordered region spans residues 165 to 209 (NSKTTAVSNAGPPVSTVEVPVSGKRKSVDMTEDVPEKDVPKNDVP). The segment covering 190 to 208 (KSVDMTEDVPEKDVPKNDV) has biased composition (basic and acidic residues). [2Fe-2S] cluster-binding residues include Cys-252, Cys-263, Cys-266, and Cys-268. The fe-S binding site A stretch occupies residues 252-268 (CAPRAGKRRRACKDCTC). The [4Fe-4S] cluster site is built by Cys-313, Cys-316, Cys-324, and Cys-327. 2 short sequence motifs (cx2C motif) span residues 313-316 (CGNC) and 324-327 (CDGC). The tract at residues 313-327 (CGNCSLGDAFRCDGC) is fe-S binding site B.

Belongs to the anamorsin family. In terms of assembly, monomer. Interacts with TAH18. Interacts with MIA40. [2Fe-2S] cluster is required as a cofactor. [4Fe-4S] cluster serves as cofactor.

It is found in the cytoplasm. The protein localises to the mitochondrion intermembrane space. Component of the cytosolic iron-sulfur (Fe-S) protein assembly (CIA) machinery required for the maturation of extramitochondrial Fe-S proteins. Part of an electron transfer chain functioning in an early step of cytosolic Fe-S biogenesis, facilitating the de novo assembly of a [4Fe-4S] cluster on the scaffold complex CFD1-NBP35. Electrons are transferred to DRE2 from NADPH via the FAD- and FMN-containing protein TAH18. TAH18-DRE2 are also required for the assembly of the diferric tyrosyl radical cofactor of ribonucleotide reductase (RNR), probably by providing electrons for reduction during radical cofactor maturation in the catalytic small subunit RNR2. The chain is Fe-S cluster assembly protein dre2 from Sclerotinia sclerotiorum (strain ATCC 18683 / 1980 / Ss-1) (White mold).